The primary structure comprises 259 residues: Phosphatidylglycerol--prolipoprotein diacylglyceryl transferase (259 aa).

4 consecutive transmembrane segments (helical) span residues 9 to 29 (IIFS…VVGI), 55 to 75 (FITY…VLLY), 92 to 112 (EGGM…YLFC), and 117 to 137 (INFL…LFLG). Arg138 is an a 1,2-diacyl-sn-glycero-3-phospho-(1'-sn-glycerol) binding site. 3 helical membrane passes run 172–192 (QLYE…YAVF), 201–221 (GLNS…IEMF), and 228–248 (IGFI…MLLL).

This sequence belongs to the Lgt family.

It localises to the cell inner membrane. It catalyses the reaction L-cysteinyl-[prolipoprotein] + a 1,2-diacyl-sn-glycero-3-phospho-(1'-sn-glycerol) = an S-1,2-diacyl-sn-glyceryl-L-cysteinyl-[prolipoprotein] + sn-glycerol 1-phosphate + H(+). It participates in protein modification; lipoprotein biosynthesis (diacylglyceryl transfer). Its function is as follows. Catalyzes the transfer of the diacylglyceryl group from phosphatidylglycerol to the sulfhydryl group of the N-terminal cysteine of a prolipoprotein, the first step in the formation of mature lipoproteins. This Rickettsia typhi (strain ATCC VR-144 / Wilmington) protein is Phosphatidylglycerol--prolipoprotein diacylglyceryl transferase.